We begin with the raw amino-acid sequence, 674 residues long: Sodium/hydrogen exchanger 1 (674 aa).

A signal peptide spans 1–24 (MKLNKSYILIVVLLLSLFYSSVSS). The segment at 31–65 (KSNNHYNSDNSNNDNKNININNNNDGDGDDDDDNN) is disordered. The span at 37-55 (NSDNSNNDNKNININNNND) shows a compositional bias: low complexity. A run of 12 helical transmembrane segments spans residues 120 to 140 (TIIF…YFII), 144 to 164 (IPFV…GIVF), 175 to 195 (VVSF…IFET), 213 to 233 (MFAV…IYIV), 275 to 297 (LYIL…YSVV), 314 to 334 (VVAI…SLIL), 336 to 356 (WINI…FSYM), 359 to 379 (VLAG…GITL), 401 to 421 (TAAF…LTAH), 432 to 452 (WSIL…CFLL), 460 to 480 (IPWV…FAFS), and 499 to 519 (NTLL…YPLL). Positions 591–674 (HELDSNPLRF…NKNNDTLPLI (84 aa)) are disordered. Acidic residues predominate over residues 601–618 (DDDEEDDDDEDLDFDSDL). Over residues 627–657 (DSIHQSDNNNNDNGNNNNNNNNIIINNNSQH) the composition is skewed to low complexity. Residues 662–674 (GSNNKNNDTLPLI) show a composition bias toward polar residues.

Belongs to the monovalent cation:proton antiporter 1 (CPA1) transporter (TC 2.A.36) family.

It localises to the membrane. With respect to regulation, LY294002, an inhibitor of the catalytic subunit of PI3-kinase, blocks NHE1-dependent (but not NHE1-independent) increase in intracellular pH in response to cAMP. In terms of biological role, regulation of intracellular pH homeostasis in response to cAMP, which is essential for chemotaxis. Necessary for F-actin localization and the kinetics of actin polymerization during chemotaxis and cell polarity but not for directional sensing. This is Sodium/hydrogen exchanger 1 (nhe1) from Dictyostelium discoideum (Social amoeba).